The primary structure comprises 355 residues: MSGQGKRLMVMAGGTGGHVFPGLAVAHHLMAQGWQVRWLGTADRMEADLVPKHGIEIDFIRISGLRGKGIKALIAAPLRIFNAWRQARAIMKAYKPDVVLGMGGYVSGPGGLAAWSLGIPVVLHEQNGIAGLTNKWLAKIATKVMQAFPGAFPNAEVVGNPVRTDVLALPLPQQRLAGREGPVRVLVVGGSQGARILNQTMPQVAAKLGDSVTIWHQSGKGSQQSVEQAYAEAGQPQHKVTEFIDDMAAAYAWADVVVCRSGALTVSEIAAAGLPALFVPFQHKDRQQYWNALPLEKAGAAKIIEQPQLSVDAVANTLAGWSRETLLTMAERARAASIPDATERVANEVSRVARA.

Residues 15-17 (TGG), N127, R163, S191, I244, 263-268 (ALTVSE), and Q288 each bind UDP-N-acetyl-alpha-D-glucosamine.

Belongs to the glycosyltransferase 28 family. MurG subfamily.

Its subcellular location is the cell inner membrane. The enzyme catalyses di-trans,octa-cis-undecaprenyl diphospho-N-acetyl-alpha-D-muramoyl-L-alanyl-D-glutamyl-meso-2,6-diaminopimeloyl-D-alanyl-D-alanine + UDP-N-acetyl-alpha-D-glucosamine = di-trans,octa-cis-undecaprenyl diphospho-[N-acetyl-alpha-D-glucosaminyl-(1-&gt;4)]-N-acetyl-alpha-D-muramoyl-L-alanyl-D-glutamyl-meso-2,6-diaminopimeloyl-D-alanyl-D-alanine + UDP + H(+). Its pathway is cell wall biogenesis; peptidoglycan biosynthesis. In terms of biological role, cell wall formation. Catalyzes the transfer of a GlcNAc subunit on undecaprenyl-pyrophosphoryl-MurNAc-pentapeptide (lipid intermediate I) to form undecaprenyl-pyrophosphoryl-MurNAc-(pentapeptide)GlcNAc (lipid intermediate II). This is UDP-N-acetylglucosamine--N-acetylmuramyl-(pentapeptide) pyrophosphoryl-undecaprenol N-acetylglucosamine transferase from Escherichia coli (strain K12 / MC4100 / BW2952).